The sequence spans 1893 residues: Serine-aspartate repeat-containing protein I (1893 aa).

An N-terminal signal peptide occupies residues 1–54 (MNFKGVKLLKNSKKRLDFLPNTLNKYSIRKFTVGTASILVGATLFLGVSNEAEA). The segment at 53–333 (EAAEKIDSPT…AHGINNKNKQ (281 aa)) is disordered. The segment covering 54–222 (AAEKIDSPTK…AEEPATKEEA (169 aa)) has biased composition (basic and acidic residues). 21 tandem repeats follow at residues 72 to 83 (AATKEEAATTEE), 84 to 95 (PATKEEAATTEE), 96 to 107 (PATKEEAAIAEE), 108 to 119 (PATKEEAATTEE), 120 to 131 (PATKEEAAIAEE), 132 to 143 (PATKEEAATTEE), 144 to 155 (PATKEEAATTEE), 156 to 167 (PATKEEAAIAEE), 168 to 179 (PATKEEAATTEE), 180 to 191 (PATKEEAAIAEE), 192 to 203 (PATKEEAVTSEE), 204 to 215 (AATKEKAAIAEE), 216 to 227 (PATKEEAAIAEE), 228 to 239 (PETKEEAATTEE), 240 to 251 (PATKEEAAIAEE), 252 to 263 (AATKEKAVTSEE), 264 to 275 (AATKEKAAIAEE), 276 to 287 (AATKEKAAIAEE), 288 to 299 (PETKEEAATTEE), 300 to 311 (PETKEEAAIAEE), and 312 to 323 (PATKEKAVTSEE). Residues 72–323 (AATKEEAATT…TKEKAVTSEE (252 aa)) are 21 X 12 AA tandem repeat of [AP]-[AE]-T-K-E-[EK]-A-[AV]-[IT]-[AST]-E-E. The segment covering 240–284 (PATKEEAAIAEEAATKEKAVTSEEAATKEKAAIAEEAATKEKAAI) has biased composition (basic and acidic residues). The segment covering 286–302 (EEPETKEEAATTEEPET) has biased composition (acidic residues). Basic and acidic residues predominate over residues 312–325 (PATKEKAVTSEEAH). The ligand binding A region stretch occupies residues 324-755 (AHGINNKNKQ…GSSTAQGDNP (432 aa)). 2 consecutive CNA-B domains span residues 756 to 874 (TYNL…YETP) and 875 to 984 (KYSL…YFDE). The interval 941–1867 (KPEGLTQTTT…GNNTQNNGTL (927 aa)) is disordered. Positions 955–975 (DENKDADGEEVHVTITDHDDF) are enriched in basic and acidic residues. Positions 981–1836 (YFDEDSDADA…DSDADADADS (856 aa)) are enriched in acidic residues. Residues 1837–1851 (DADKYHNDTADKSND) show a composition bias toward basic and acidic residues. Residues 1854 to 1858 (LPDTG) carry the LPXTG sorting signal motif. At T1857 the chain carries Pentaglycyl murein peptidoglycan amidated threonine. The propeptide at 1858-1893 (GNNTQNNGTLFGSLFAALGGLFLVGSRRKNKNNEEK) is removed by sortase.

Belongs to the serine-aspartate repeat-containing protein (SDr) family.

The protein resides in the secreted. It is found in the cell wall. Its function is as follows. Responsible for collagen binding by S.saprophyticus. The sequence is that of Serine-aspartate repeat-containing protein I (sdrI) from Staphylococcus saprophyticus.